The sequence spans 101 residues: MAAPLSVEVEFGGGAELLFDGIKKHRVTLPGQEEPWDIRNLLIWIKKNLLKERPELFIQGDSVRPGILVLINDADWELLGELDYQLQDQDSVLFISTLHGG.

G101 carries the 1-thioglycine modification. G101 is covalently cross-linked (Glycyl lysine isopeptide (Gly-Lys) (interchain with K-? in acceptor proteins)).

It belongs to the URM1 family. As to quaternary structure, component of a complex at least composed of URM1, CTU2/NCS2 and CTU1/ATPBD3. In terms of processing, C-terminal thiocarboxylation occurs in 2 steps, it is first acyl-adenylated (-COAMP) via the hesA/moeB/thiF part of MOCS3, then thiocarboxylated (-COSH) via the rhodanese domain of MOCS3.

Its subcellular location is the cytoplasm. Its pathway is tRNA modification; 5-methoxycarbonylmethyl-2-thiouridine-tRNA biosynthesis. Functionally, acts as a sulfur carrier required for 2-thiolation of mcm(5)S(2)U at tRNA wobble positions of cytosolic tRNA(Lys), tRNA(Glu) and tRNA(Gln). Serves as sulfur donor in tRNA 2-thiolation reaction by being thiocarboxylated (-COSH) at its C-terminus by MOCS3. The sulfur is then transferred to tRNA to form 2-thiolation of mcm(5)S(2)U. Also acts as a ubiquitin-like protein (UBL) that is covalently conjugated via an isopeptide bond to lysine residues of target proteins such as MOCS3, ATPBD3, CTU2, USP15 and CAS. The thiocarboxylated form serves as substrate for conjugation and oxidative stress specifically induces the formation of UBL-protein conjugates. This is Ubiquitin-related modifier 1 from Homo sapiens (Human).